The following is a 776-amino-acid chain: Conserved oligomeric Golgi complex subunit 4 (776 aa).

2 positions are modified to phosphoserine: S342 and S345.

This sequence belongs to the COG4 family. In terms of assembly, component of the conserved oligomeric Golgi complex which is composed of eight different subunits and is required for normal Golgi morphology and localization.

Its subcellular location is the golgi apparatus membrane. In terms of biological role, required for normal Golgi function. In Drosophila melanogaster (Fruit fly), this protein is Conserved oligomeric Golgi complex subunit 4.